Consider the following 543-residue polypeptide: Chaperonin GroEL 1 (543 aa).

ATP contacts are provided by residues 30-33 (TLGP), lysine 51, 87-91 (DGTTT), glycine 415, and aspartate 496.

The protein belongs to the chaperonin (HSP60) family. As to quaternary structure, forms a cylinder of 14 subunits composed of two heptameric rings stacked back-to-back. Interacts with the co-chaperonin GroES.

Its subcellular location is the cytoplasm. The enzyme catalyses ATP + H2O + a folded polypeptide = ADP + phosphate + an unfolded polypeptide.. Its function is as follows. Together with its co-chaperonin GroES, plays an essential role in assisting protein folding. The GroEL-GroES system forms a nano-cage that allows encapsulation of the non-native substrate proteins and provides a physical environment optimized to promote and accelerate protein folding. The protein is Chaperonin GroEL 1 of Mesorhizobium japonicum (strain LMG 29417 / CECT 9101 / MAFF 303099) (Mesorhizobium loti (strain MAFF 303099)).